Consider the following 142-residue polypeptide: Large-conductance mechanosensitive channel (142 aa).

A run of 3 helical transmembrane segments spans residues 10–30 (FAVK…GAFG), 40–60 (LIMP…LFIV), and 86–106 (GNFI…FVMV).

The protein belongs to the MscL family. Homopentamer.

Its subcellular location is the cell inner membrane. In terms of biological role, channel that opens in response to stretch forces in the membrane lipid bilayer. May participate in the regulation of osmotic pressure changes within the cell. The polypeptide is Large-conductance mechanosensitive channel (Acidovorax ebreus (strain TPSY) (Diaphorobacter sp. (strain TPSY))).